Here is a 240-residue protein sequence, read N- to C-terminus: MASDAKFRRVLLKISGEGLMGTREYGLDPETVDRIAREVKSVRDLGVEVCVVIGGGNIFRGVSGASSGMERAAADNMGMLATVINALSVQNALEKVGVETRVQSAIVMPTVCEAFIRRRAIRHLEKGRVVIFAAGTGNPFFTTDTAAALRAVEMGCDALLKATQVDGVYSADPKKVKDAVRYDRLTFNEVLARDLAVMDTSAIALCRENKVPIVVFDLHRPGAFAETVSGRGLFTIIAND.

ATP is bound at residue 13–16; the sequence is KISG. G55 contributes to the UMP binding site. G56 and R60 together coordinate ATP. Residues D75 and 136–143 contribute to the UMP site; that span reads TGNPFFTT. T163, Q164, Y169, and D172 together coordinate ATP.

It belongs to the UMP kinase family. As to quaternary structure, homohexamer.

It localises to the cytoplasm. It carries out the reaction UMP + ATP = UDP + ADP. The protein operates within pyrimidine metabolism; CTP biosynthesis via de novo pathway; UDP from UMP (UMPK route): step 1/1. With respect to regulation, inhibited by UTP. In terms of biological role, catalyzes the reversible phosphorylation of UMP to UDP. In Paramagnetospirillum magneticum (strain ATCC 700264 / AMB-1) (Magnetospirillum magneticum), this protein is Uridylate kinase.